The following is a 132-amino-acid chain: Inclusion membrane protein E (132 aa).

Transmembrane regions (helical) follow at residues 41 to 61 and 66 to 86; these read LGVVCSIICLALGIAAAAVGV and FALGLGIIAILLGIVLFATSA.

The protein resides in the secreted. Its subcellular location is the host vacuole. The protein localises to the host pathogen-containing vacuole. It is found in the host pathogen-containing vacuole membrane. Its function is as follows. Inclusion membrane protein probably involved in early modification events of the chlamydial inclusion. This chain is Inclusion membrane protein E, found in Chlamydia trachomatis serovar L2 (strain ATCC VR-902B / DSM 19102 / 434/Bu).